Here is a 1316-residue protein sequence, read N- to C-terminus: DNA-directed RNA polymerase subunit beta' (1316 aa).

The Zn(2+) site is built by cysteine 60, cysteine 62, cysteine 75, and cysteine 78. Aspartate 535, aspartate 537, and aspartate 539 together coordinate Mg(2+). Cysteine 891, cysteine 968, cysteine 975, and cysteine 978 together coordinate Zn(2+).

Belongs to the RNA polymerase beta' chain family. In terms of assembly, the RNAP catalytic core consists of 2 alpha, 1 beta, 1 beta' and 1 omega subunit. When a sigma factor is associated with the core the holoenzyme is formed, which can initiate transcription. Requires Mg(2+) as cofactor. It depends on Zn(2+) as a cofactor.

The catalysed reaction is RNA(n) + a ribonucleoside 5'-triphosphate = RNA(n+1) + diphosphate. DNA-dependent RNA polymerase catalyzes the transcription of DNA into RNA using the four ribonucleoside triphosphates as substrates. The protein is DNA-directed RNA polymerase subunit beta' of Mycobacterium leprae (strain Br4923).